Here is a 179-residue protein sequence, read N- to C-terminus: MSLKTKYRDIIVPKLMKEFGYTNIHQVPKVVKVTINRGLGEGAQNAKALESSLAEIAKIAGQKPVVTRAKKAIAGFKIRAGMPVGLMVTLRGDRRDAFLERLINLSLPRIRDFRGISPRSFDGRGNYTLGLREQLIFPEITYDSIDQIRGMDITIVTSANSDEEGRALLRELGMPFREN.

The protein belongs to the universal ribosomal protein uL5 family. Part of the 50S ribosomal subunit; part of the 5S rRNA/L5/L18/L25 subcomplex. Contacts the 5S rRNA and the P site tRNA. Forms a bridge to the 30S subunit in the 70S ribosome.

This is one of the proteins that bind and probably mediate the attachment of the 5S RNA into the large ribosomal subunit, where it forms part of the central protuberance. In the 70S ribosome it contacts protein S13 of the 30S subunit (bridge B1b), connecting the 2 subunits; this bridge is implicated in subunit movement. Contacts the P site tRNA; the 5S rRNA and some of its associated proteins might help stabilize positioning of ribosome-bound tRNAs. The sequence is that of Large ribosomal subunit protein uL5 from Synechococcus elongatus (strain ATCC 33912 / PCC 7942 / FACHB-805) (Anacystis nidulans R2).